The chain runs to 242 residues: Venom nerve growth factor 2 (242 aa).

An N-terminal signal peptide occupies residues 1–18 (MSMLCYTLIIAFLIGIWA). A propeptide spanning residues 19–125 (APQSEDNVPL…ALNRNIQAKR (107 aa)) is cleaved from the precursor. Residues 47-66 (DLKTSRNTDQRHPAPKKADD) show a composition bias toward basic and acidic residues. The segment at 47–70 (DLKTSRNTDQRHPAPKKADDQELG) is disordered. 3 disulfide bridges follow: cysteine 139–cysteine 203, cysteine 181–cysteine 231, and cysteine 191–cysteine 233.

Belongs to the NGF-beta family. As to quaternary structure, homodimer; non-covalently linked. As to expression, expressed by the venom gland.

It localises to the secreted. In terms of biological role, nerve growth factor is important for the development and maintenance of the sympathetic and sensory nervous systems. It stimulates division and differentiation of sympathetic and embryonic sensory neurons as well as basal forebrain cholinergic neurons in the brain. Its relevance in the snake venom is not clear. However, it has been shown to inhibit metalloproteinase-dependent proteolysis of platelet glycoprotein Ib alpha, suggesting a metalloproteinase inhibition to prevent metalloprotease autodigestion and/or protection against prey proteases. Binds a lipid between the two protein chains in the homodimer. The lipid-bound form promotes histamine relase from mouse mast cells, contrary to the lipid-free form. The sequence is that of Venom nerve growth factor 2 from Pseudechis australis (Mulga snake).